We begin with the raw amino-acid sequence, 556 residues long: Arginine--tRNA ligase (556 aa).

The short motif at 132-142 (ANPTGDLHLGH) is the 'HIGH' region element.

Belongs to the class-I aminoacyl-tRNA synthetase family. Monomer.

It localises to the cytoplasm. The enzyme catalyses tRNA(Arg) + L-arginine + ATP = L-arginyl-tRNA(Arg) + AMP + diphosphate. This Shouchella clausii (strain KSM-K16) (Alkalihalobacillus clausii) protein is Arginine--tRNA ligase.